Reading from the N-terminus, the 343-residue chain is Phosphate acyltransferase (343 aa).

This sequence belongs to the PlsX family. As to quaternary structure, homodimer. Probably interacts with PlsY.

The protein localises to the cytoplasm. It carries out the reaction a fatty acyl-[ACP] + phosphate = an acyl phosphate + holo-[ACP]. The protein operates within lipid metabolism; phospholipid metabolism. In terms of biological role, catalyzes the reversible formation of acyl-phosphate (acyl-PO(4)) from acyl-[acyl-carrier-protein] (acyl-ACP). This enzyme utilizes acyl-ACP as fatty acyl donor, but not acyl-CoA. The polypeptide is Phosphate acyltransferase (Halorhodospira halophila (strain DSM 244 / SL1) (Ectothiorhodospira halophila (strain DSM 244 / SL1))).